The primary structure comprises 148 residues: Early glycoprotein GP48 (148 aa).

The N-terminal stretch at 1-21 (MMLRAWRLMVLLAAYCYYVFA) is a signal peptide. Asn22, Asn44, Asn49, Asn57, Asn65, Asn104, Asn108, Asn118, Asn135, and Asn144 each carry an N-linked (GlcNAc...) asparagine; by host glycan.

It belongs to the RL11 family. Post-translationally, N-glycosylated and possibly O-glycosylated.

The protein localises to the virion membrane. The protein is Early glycoprotein GP48 (UL4) of Homo sapiens (Human).